The primary structure comprises 612 residues: RNA-binding protein MRN1 (612 aa).

The span at Met-1–Asn-28 shows a compositional bias: low complexity. Disordered stretches follow at residues Met-1–Ser-57 and Pro-105–Gln-125. Composition is skewed to polar residues over residues Tyr-42–Ser-57 and Asp-115–Gln-125. 4 consecutive RRM domains span residues Arg-201–Pro-274, Arg-292–Gln-379, Arg-431–His-504, and Arg-522–Asp-602.

It localises to the cytoplasm. Its function is as follows. RNA-binding protein that binds specific categories of mRNAs, including those that contain upstream open reading frames (uORFs) and internal ribosome entry sites (IRES). Probably involved in translational regulation. The polypeptide is RNA-binding protein MRN1 (MRN1) (Saccharomyces cerevisiae (strain ATCC 204508 / S288c) (Baker's yeast)).